The chain runs to 162 residues: Auxin-responsive protein SAUR36 (162 aa).

This sequence belongs to the ARG7 family. Expressed in embryo, endosperm, growing hypocotyls and shoot apical meristems.

Its function is as follows. Acts a positive regulator of leaf senescence and may mediate auxin-induced leaf senescence. Plays a role in the regulation of seed germination by gibberellins and abscisic acid (ABA). Plays a role in the regulation of light-dependent hypocotyl elongation. This Arabidopsis thaliana (Mouse-ear cress) protein is Auxin-responsive protein SAUR36.